Here is a 196-residue protein sequence, read N- to C-terminus: MKVNPNNIELIISAVKEDQYPETELSEVALSGRSNVGKSTFINSMIGRKNMARTSQQPGKTQTLNFYNIDEQLIFVDVPGYGYAKVSKTQREKFGKMIEEYITKRENLQLVIQLVDLRHDPTQDDILMYNYLKHFDIPTLVICTKEDKIPKGKVQKHIKNIKTQLDMDPDDTIVSYSSIQNNKQQQIWNLIEPYIS.

Residues 24 to 196 form the EngB-type G domain; the sequence is ELSEVALSGR…IWNLIEPYIS (173 aa). Residues 32 to 39, 59 to 63, 77 to 80, 144 to 147, and 176 to 178 each bind GTP; these read GRSNVGKS, GKTQT, DVPG, TKED, and YSS. Residues serine 39 and threonine 61 each coordinate Mg(2+).

The protein belongs to the TRAFAC class TrmE-Era-EngA-EngB-Septin-like GTPase superfamily. EngB GTPase family. Requires Mg(2+) as cofactor.

Necessary for normal cell division and for the maintenance of normal septation. This chain is Probable GTP-binding protein EngB, found in Staphylococcus aureus (strain MRSA252).